Consider the following 208-residue polypeptide: MIGLVGRKVGMTRVFTEDGVSIPVTVIEIEANRVTQVKTLENDGYSAIQVTTGSKKANRVTKPEAGHFVKAGVEAGRGLWEFRTEGEEFTLGQEINVDIFTDVKKVDVTGTSKGKGFQGGVKRWNFRTQDATHGNSLSHRVLGSIGQNQTPGRVFKGKKMAGHLGAERVTVQSLEVVRVDAERKLLLVKGAVPGATNSDVIVKPAVKA.

Glutamine 149 bears the N5-methylglutamine mark.

The protein belongs to the universal ribosomal protein uL3 family. As to quaternary structure, part of the 50S ribosomal subunit. Forms a cluster with proteins L14 and L19. Post-translationally, methylated by PrmB.

One of the primary rRNA binding proteins, it binds directly near the 3'-end of the 23S rRNA, where it nucleates assembly of the 50S subunit. This Actinobacillus pleuropneumoniae serotype 5b (strain L20) protein is Large ribosomal subunit protein uL3.